The chain runs to 353 residues: DNA polymerase IV (353 aa).

The UmuC domain maps to 14–198; the sequence is IIHIDMDAFF…MDISKFHGVG (185 aa). Residues D18 and D116 each contribute to the Mg(2+) site. E117 is a catalytic residue.

It belongs to the DNA polymerase type-Y family. In terms of assembly, monomer. Mg(2+) serves as cofactor.

The protein resides in the cytoplasm. It carries out the reaction DNA(n) + a 2'-deoxyribonucleoside 5'-triphosphate = DNA(n+1) + diphosphate. Its function is as follows. Poorly processive, error-prone DNA polymerase involved in untargeted mutagenesis. Copies undamaged DNA at stalled replication forks, which arise in vivo from mismatched or misaligned primer ends. These misaligned primers can be extended by PolIV. Exhibits no 3'-5' exonuclease (proofreading) activity. May be involved in translesional synthesis, in conjunction with the beta clamp from PolIII. In Streptococcus pneumoniae serotype 4 (strain ATCC BAA-334 / TIGR4), this protein is DNA polymerase IV.